The primary structure comprises 170 residues: Thialysine N-epsilon-acetyltransferase (170 aa).

The N-acetyltransferase domain maps to 4–168 (VRIREAKEGD…FQGEATRKLA (165 aa)). 27-28 (FE) contacts substrate. The residue at position 29 (K29) is an N6-acetyllysine. E92 contacts substrate. Acetyl-CoA contacts are provided by residues 94-96 (IYV), 102-107 (GQGIGS), 133-135 (NQR), and Y140. The Proton donor role is filled by Y140. E152 serves as a coordination point for substrate.

This sequence belongs to the acetyltransferase family. Homodimer. In terms of tissue distribution, widely expressed. Under physiological conditions, SSAT2 is expressed at lower level that SSAT1 (SSAT). Many tissues express only SSAT1, several tissues express both SSAT1 and SSAT2, and bone, cervix, ovary and pineal gland expressed only SSAT2.

It is found in the cytoplasm. The catalysed reaction is S-(2-aminoethyl)-L-cysteine + acetyl-CoA = S-(2-acetamidoethyl)-L-cysteine + CoA + H(+). It catalyses the reaction an alkane-alpha,omega-diamine + acetyl-CoA = an N-acetylalkane-alpha,omega-diamine + CoA + H(+). In terms of biological role, catalyzes the N-acetylation of the amino acid thialysine (S-(2-aminoethyl)-L-cysteine), a L-lysine analog with the 4-methylene group substituted with a sulfur. May also catalyze acetylation of polyamines, such as norspermidine, spermidine or spermine. However, ability to acetylate polyamines is weak, suggesting that it does not act as a diamine acetyltransferase in vivo. The sequence is that of Thialysine N-epsilon-acetyltransferase from Homo sapiens (Human).